Here is a 278-residue protein sequence, read N- to C-terminus: Beta-lactamase-like protein str5 (278 aa).

Residues 20–37 (VFVLAALLSATFAFFTHT) traverse the membrane as a helical segment. Asn-112 carries an N-linked (GlcNAc...) asparagine glycan.

This sequence belongs to the beta-lactamase family.

The protein resides in the membrane. Its pathway is mycotoxin biosynthesis. In terms of biological role, beta-lactamase-like protein; part of the gene cluster that mediates the biosynthesis of strobilurin A, an antifungal polyketide that contains a key beta-methoxyacrylate toxophore that targets the complex III of the mitochondrial electron transport chain. Strobilurin biosynthesis begins with construction of benzoyl CoA by step-wise elimination of ammonia from phenylalanine by the phenylalanine ammonia-lyase str11, oxygenation by str8 and retro-Claisen reaction to form benzoic acid, which is activated to its CoA thiolester benzoyl CoA by the dedicated CoA ligase str10. Benzoyl CoA forms the starter unit for the highly reducing polyketide synthase stpks1 that produces the polyketide prestrobilutin A. The FAD-dependent oxygenase str9 then catalyzes the key oxidative rearrangement responsible for the creation of the beta-methoxyacrylate toxophore. Str9 performs epoxidation of the 2,3 olefin of prestrobilutin A, followed by Meinwald rearrangement to furnish the aldehyde intermediate. Rapid enolization of the aldehyde intermediate would give the beta-methoxyacrylate skeleton and methylations catalyzed by str2 and str3 complete the synthesis and lead to the production of strobilurin A. The short-chain dehydrogenase stl2 and the dehydrogenase str4 play a role in the shunt pathway leading to the production of bolineol. The cluster encodes no obvious halogenase gene that could be involved in production of strobilurin B, nor any obvious dimethylallyl-transferase that could be involved in the production of strobilurin G. It is possible that unknown proteins encoded in, or near, the cluster (such as str1 or stl1) may form new classes of halogenases or dimethylally-transferases, or that the responsible genes are located elsewhere on the genome. Similarly, proteins encoded by str5/str6 hydrolases appear to have no chemical role in the biosynthesis of strobilurin A. Finally, no obvious self-resistance gene is found within the cluster. The sequence is that of Beta-lactamase-like protein str5 from Strobilurus tenacellus.